The sequence spans 559 residues: MEFDYIIIGAGSAGNVLATRLTEDSDVTVLLLEAGGPDYRFDFRTQMPAALAYPLQGKRYNWAYETEPEPYMNNRRMECGRGKGLGGSSLINGMCYIRGNAMDLDNWAQQPGLERWTYLDCLPYYRKSETRDIGANDYHGGDGPVSITTCKPGNNPLFAAMIEAGVQAGYPRTDDLNGYQQEGFGPMDRFVTPKGRRSSTARGYLDTAKQRPNLKIITHATTDRILFENKRAVGVAYLHGASNTPQEVHARREVLLCAGAIASPQILQRSGVGNAELLKQFDIPVVHDLPGVGENLQDHLEMYLQYECKEPVSLYPALKWWNQPKIGAEWLFNGTGIGASNHFEGGGFIRSREEFAWPNIQYHFLPVAINYNGSNAVEAHGFQCHVGSMRSPSRGHVRIKSRDPHQHPAILFNYMSHEQDWQEFRDAIRITRQIINQPALDKFRGREISPGIDCQTDEQLDEFVRNHAETAYHPCGTCKMGSDEMAVVDDEGRVHGLEGLRVVDASIMPLIITGNLNATTIMIGEKIADNIRGRTPLPRSTASYFVAGDRPVRGEPLRP.

4-33 is an FAD binding site; it reads DYIIIGAGSAGNVLATRLTEDSDVTVLLLE. The active-site Proton acceptor is the His-473.

This sequence belongs to the GMC oxidoreductase family. The cofactor is FAD.

It catalyses the reaction choline + A = betaine aldehyde + AH2. It carries out the reaction betaine aldehyde + NAD(+) + H2O = glycine betaine + NADH + 2 H(+). It functions in the pathway amine and polyamine biosynthesis; betaine biosynthesis via choline pathway; betaine aldehyde from choline (cytochrome c reductase route): step 1/1. Functionally, involved in the biosynthesis of the osmoprotectant glycine betaine. Catalyzes the oxidation of choline to betaine aldehyde and betaine aldehyde to glycine betaine at the same rate. The polypeptide is Oxygen-dependent choline dehydrogenase (Cronobacter sakazakii (strain ATCC BAA-894) (Enterobacter sakazakii)).